The following is a 331-amino-acid chain: ADP-L-glycero-D-manno-heptose-6-epimerase (331 aa).

NADP(+) is bound by residues 11–12 (FI), 32–33 (DN), Lys-39, Lys-54, 75–79 (LGACT), and Asn-92. Tyr-139 serves as the catalytic Proton acceptor. NADP(+) is bound at residue Lys-143. Substrate is bound at residue Asn-168. NADP(+) is bound by residues Val-169 and Lys-177. The Proton acceptor role is filled by Lys-177. Substrate-binding positions include Arg-179, Gln-186, 200–203 (FGEH), His-213, and Tyr-292.

It belongs to the NAD(P)-dependent epimerase/dehydratase family. HldD subfamily. As to quaternary structure, homopentamer. It depends on NADP(+) as a cofactor.

It carries out the reaction ADP-D-glycero-beta-D-manno-heptose = ADP-L-glycero-beta-D-manno-heptose. Its pathway is nucleotide-sugar biosynthesis; ADP-L-glycero-beta-D-manno-heptose biosynthesis; ADP-L-glycero-beta-D-manno-heptose from D-glycero-beta-D-manno-heptose 7-phosphate: step 4/4. Catalyzes the interconversion between ADP-D-glycero-beta-D-manno-heptose and ADP-L-glycero-beta-D-manno-heptose via an epimerization at carbon 6 of the heptose. The polypeptide is ADP-L-glycero-D-manno-heptose-6-epimerase (Cupriavidus pinatubonensis (strain JMP 134 / LMG 1197) (Cupriavidus necator (strain JMP 134))).